We begin with the raw amino-acid sequence, 389 residues long: Phospho-N-acetylmuramoyl-pentapeptide-transferase (389 aa).

The next 10 helical transmembrane spans lie at 25-45, 73-93, 97-117, 135-155, 189-209, 222-242, 259-279, 286-306, 311-331, and 366-386; these read RAVA…PWVI, TMGG…WADL, FIWI…VDDY, FWQS…VSEA, SMTY…VIVG, GLVI…AYVM, AGEM…FLWF, VFMG…IAVI, IVLF…MLQV, and QVVV…LSTL.

Belongs to the glycosyltransferase 4 family. MraY subfamily. The cofactor is Mg(2+).

Its subcellular location is the cell inner membrane. It catalyses the reaction UDP-N-acetyl-alpha-D-muramoyl-L-alanyl-gamma-D-glutamyl-meso-2,6-diaminopimeloyl-D-alanyl-D-alanine + di-trans,octa-cis-undecaprenyl phosphate = di-trans,octa-cis-undecaprenyl diphospho-N-acetyl-alpha-D-muramoyl-L-alanyl-D-glutamyl-meso-2,6-diaminopimeloyl-D-alanyl-D-alanine + UMP. It participates in cell wall biogenesis; peptidoglycan biosynthesis. Functionally, catalyzes the initial step of the lipid cycle reactions in the biosynthesis of the cell wall peptidoglycan: transfers peptidoglycan precursor phospho-MurNAc-pentapeptide from UDP-MurNAc-pentapeptide onto the lipid carrier undecaprenyl phosphate, yielding undecaprenyl-pyrophosphoryl-MurNAc-pentapeptide, known as lipid I. This chain is Phospho-N-acetylmuramoyl-pentapeptide-transferase, found in Paraburkholderia phymatum (strain DSM 17167 / CIP 108236 / LMG 21445 / STM815) (Burkholderia phymatum).